Consider the following 521-residue polypeptide: CD166 antigen (521 aa).

At 1 to 465 (GSPVFIAFRS…NREQVNHRAT (465 aa)) the chain is on the extracellular side. N-linked (GlcNAc...) asparagine glycosylation is found at Asn33, Asn105, Asn244, Asn299, Asn395, Asn418, and Asn437. One can recognise an Ig-like V-type 2 domain in the interval 63–172 (PTIVKVFKQP…YGPSGQKTVQ (110 aa)). Intrachain disulfides connect Cys95-Cys158, Cys208-Cys251, Cys292-Cys330, and Cys373-Cys423. Ig-like C2-type domains are found at residues 183–266 (PTEQ…TAIT), 271–347 (DLSL…ESLT), and 354–439 (PQIK…LNVS). The helical transmembrane segment at 466-487 (LIVGIVLRLLHGALVAGVVYWL) threads the bilayer. Residues 488–521 (YVKKSKTASKHVNKDLGNLEENKKLEQNNHRTEA) lie on the Cytoplasmic side of the membrane. The segment at 500-521 (NKDLGNLEENKKLEQNNHRTEA) is disordered. The span at 507-521 (EENKKLEQNNHRTEA) shows a compositional bias: basic and acidic residues.

As to quaternary structure, homodimer. Interacts (via extracellular domain) with CD6 (via extracellular domain). Homodimerization and interaction with CD6 involve the same region and cannot occur simultaneously. The affinity for CD6 is much higher than the affinity for self-association. Interacts (via glycosylated extracellular domain) with LGALS1 and LGALS3. Interaction with LGALS1 or LGALS3 inhibits interaction with CD6. Post-translationally, glycosylated.

The protein localises to the cell membrane. It is found in the cell projection. The protein resides in the axon. Its subcellular location is the dendrite. Cell adhesion molecule that mediates both heterotypic cell-cell contacts via its interaction with CD6, as well as homotypic cell-cell contacts. Promotes T-cell activation and proliferation via its interactions with CD6. Contributes to the formation and maturation of the immunological synapse via its interactions with CD6. Mediates homotypic interactions with cells that express ALCAM. Mediates attachment of dendritic cells onto endothelial cells via homotypic interaction. Inhibits endothelial cell migration and promotes endothelial tube formation via homotypic interactions. Required for normal organization of the lymph vessel network. Required for normal hematopoietic stem cell engraftment in the bone marrow. Plays a role in hematopoiesis; required for normal numbers of hematopoietic stem cells in bone marrow. Promotes in vitro osteoblast proliferation and differentiation. Promotes neurite extension, axon growth and axon guidance; axons grow preferentially on surfaces that contain ALCAM. Mediates outgrowth and pathfinding for retinal ganglion cell axons. In Canis lupus familiaris (Dog), this protein is CD166 antigen (ALCAM).